The sequence spans 780 residues: Ribosome biogenesis protein BOP1 homolog (780 aa).

Positions 1–11 are enriched in basic residues; sequence MTKKQAIKRKV. Residues 1–155 form a disordered region; sequence MTKKQAIKRK…DSDTSDEEDI (155 aa). Residues 17 to 26 show a composition bias toward polar residues; the sequence is TNEQSSASEP. 4 stretches are compositionally biased toward acidic residues: residues 44–53, 60–72, 83–113, and 145–154; these read EDTTDDEGID, SSED…DEEG, AEGD…DAEE, and EDSDTSDEED. 7 WD repeats span residues 441–482, 484–522, 566–608, 611–649, 652–691, 695–734, and 750–780; these read GHTD…RTIE, NDVV…KLLI, THFK…SQIP, KSKG…LIKK, TNSK…KPYQ, LHRN…DLLQ, and RDEF…RLYT.

Belongs to the WD repeat BOP1/ERB1 family.

It localises to the nucleus. It is found in the nucleolus. The protein resides in the nucleoplasm. Required for maturation of ribosomal RNAs and formation of the large ribosomal subunit. This is Ribosome biogenesis protein BOP1 homolog from Drosophila virilis (Fruit fly).